The primary structure comprises 418 residues: STE20-related kinase adapter protein beta (418 aa).

The Protein kinase domain maps to Y58 to F369. Residues I64–T72 and K89 contribute to the ATP site.

It belongs to the protein kinase superfamily. STE Ser/Thr protein kinase family. STE20 subfamily. In terms of assembly, component of a trimeric complex composed of STK11/LKB1, STRAD (STRADA or STRADB) and CAB39/MO25 (CAB39/MO25alpha or CAB39L/MO25beta): the complex tethers STK11/LKB1 in the cytoplasm and stimulates its catalytic activity. Interacts with BIRC4/XIAP. These two proteins are likely to coexist in a complex with TAK1, TRAF6, TAB1 and TAB2. As to expression, highly expressed in heart, skeletal muscle, testis, liver and colon.

The protein resides in the nucleus. It localises to the cytoplasm. Its function is as follows. Pseudokinase which, in complex with CAB39/MO25 (CAB39/MO25alpha or CAB39L/MO25beta), binds to and activates STK11/LKB1. Adopts a closed conformation typical of active protein kinases and binds STK11/LKB1 as a pseudosubstrate, promoting conformational change of STK11/LKB1 in an active conformation. This is STE20-related kinase adapter protein beta (STRADB) from Homo sapiens (Human).